A 42-amino-acid polypeptide reads, in one-letter code: uncharacterized protein (42 aa).

Residues 10-30 form a helical membrane-spanning segment; the sequence is VANWVTVILMALAGYAVLALA.

Its subcellular location is the host membrane. This is an uncharacterized protein from Acinetobacter calcoaceticus (Arthrobacter siderocapsulatus).